The following is a 634-amino-acid chain: RING finger protein 207 (634 aa).

An RING-type zinc finger spans residues 25 to 63; that stretch reads CHLCQEQYEHPCLLDCYHTFCASCLRGRVADSRLTCPVC. The segment at 93–145 adopts a B box-type; atypical zinc-finger fold; it reads EETVQCANCDLECKKQDVDAMYYCNTCCQPLCRDCRETTHKAKMFSRHEIVSL. The Zn(2+) site is built by C98, C101, C127, and H132. The interval 575–634 is disordered; the sequence is YEDSTSTADTQPSNELSCNTEDNWTLNSLSEETNPKNKDYYRTNKQKNTTDSTNRKEIPM. Over residues 577-606 the composition is skewed to polar residues; that stretch reads DSTSTADTQPSNELSCNTEDNWTLNSLSEE. The span at 607–616 shows a compositional bias: basic and acidic residues; sequence TNPKNKDYYR.

The protein resides in the cytoplasm. Plays a role in cardiac repolarization possibly by stabilizing membrane expression of the potassium channel kcnh6a/zerg, or by assisting its synthesis, folding or export from the endoplasmic reticulum, in a heat shock protein-dependent manner. The chain is RING finger protein 207 (rnf207b) from Danio rerio (Zebrafish).